A 178-amino-acid chain; its full sequence is Acireductone dioxygenase 1 (178 aa).

Positions 84, 86, 90, and 130 each coordinate Fe(2+). 4 residues coordinate Ni(2+): His-84, His-86, Glu-90, and His-130.

It belongs to the acireductone dioxygenase (ARD) family. The cofactor is Fe(2+). Ni(2+) serves as cofactor.

It is found in the cytoplasm. The protein resides in the nucleus. The enzyme catalyses 1,2-dihydroxy-5-(methylsulfanyl)pent-1-en-3-one + O2 = 4-methylsulfanyl-2-oxobutanoate + formate + 2 H(+). The catalysed reaction is 1,2-dihydroxy-5-(methylsulfanyl)pent-1-en-3-one + O2 = 3-(methylsulfanyl)propanoate + CO + formate + 2 H(+). It functions in the pathway amino-acid biosynthesis; L-methionine biosynthesis via salvage pathway; L-methionine from S-methyl-5-thio-alpha-D-ribose 1-phosphate: step 5/6. Functionally, catalyzes 2 different reactions between oxygen and the acireductone 1,2-dihydroxy-3-keto-5-methylthiopentene (DHK-MTPene) depending upon the metal bound in the active site. Fe-containing acireductone dioxygenase (Fe-ARD) produces formate and 2-keto-4-methylthiobutyrate (KMTB), the alpha-ketoacid precursor of methionine in the methionine recycle pathway. Ni-containing acireductone dioxygenase (Ni-ARD) produces methylthiopropionate, carbon monoxide and formate, and does not lie on the methionine recycle pathway. This chain is Acireductone dioxygenase 1, found in Coprinopsis cinerea (strain Okayama-7 / 130 / ATCC MYA-4618 / FGSC 9003) (Inky cap fungus).